Reading from the N-terminus, the 461-residue chain is Type IV secretion system protein PtlD homolog (461 aa).

The N-terminal stretch at Met1–Ala24 is a signal peptide. A run of 5 helical transmembrane segments spans residues Leu118 to Leu138, Trp232 to Ser252, Leu253 to Val273, Ala294 to Gly314, and Met333 to Ala353. Positions Ala376 to Ala411 are enriched in low complexity. Residues Ala376–Pro461 are disordered. Residues Val439 to Val453 are compositionally biased toward basic and acidic residues.

The protein localises to the cell membrane. This is Type IV secretion system protein PtlD homolog (ptlD) from Bordetella bronchiseptica (strain ATCC BAA-588 / NCTC 13252 / RB50) (Alcaligenes bronchisepticus).